We begin with the raw amino-acid sequence, 910 residues long: Protein translocase subunit SecA (910 aa).

ATP contacts are provided by residues Q87, 105-109, and D508; that span reads GEGKT. Residues 558 to 568 show a composition bias toward basic and acidic residues; sequence RHESRRIDNQL. Disordered regions lie at residues 558-580 and 873-910; these read RHES…DPGS and AAQQ…GQLS. The Zn(2+) site is built by C894, C896, C905, and H906. A compositionally biased stretch (basic residues) spans 900–910; it reads KKYKHCHGQLS.

The protein belongs to the SecA family. In terms of assembly, monomer and homodimer. Part of the essential Sec protein translocation apparatus which comprises SecA, SecYEG and auxiliary proteins SecDF-YajC and YidC. Zn(2+) serves as cofactor.

It localises to the cell inner membrane. It is found in the cytoplasm. The enzyme catalyses ATP + H2O + cellular proteinSide 1 = ADP + phosphate + cellular proteinSide 2.. In terms of biological role, part of the Sec protein translocase complex. Interacts with the SecYEG preprotein conducting channel. Has a central role in coupling the hydrolysis of ATP to the transfer of proteins into and across the cell membrane, serving both as a receptor for the preprotein-SecB complex and as an ATP-driven molecular motor driving the stepwise translocation of polypeptide chains across the membrane. This is Protein translocase subunit SecA from Stenotrophomonas maltophilia (strain R551-3).